Consider the following 87-residue polypeptide: Retinal rod rhodopsin-sensitive cGMP 3',5'-cyclic phosphodiesterase subunit gamma (87 aa).

An N-acetylmethionine modification is found at methionine 1. Residues 1-12 are compositionally biased toward basic and acidic residues; that stretch reads MNLEPPKGEIRS. The tract at residues 1 to 55 is disordered; the sequence is MNLEPPKGEIRSATRVIGGPVTPRKGPPKFKQRQTRQFKSKPPKKGVQGFGDDIP. Basic residues predominate over residues 26-44; the sequence is GPPKFKQRQTRQFKSKPPK.

This sequence belongs to the rod/cone cGMP-PDE gamma subunit family. Oligomer composed of two catalytic chains (alpha and beta), an inhibitory chain (gamma) and the delta chain.

It carries out the reaction 3',5'-cyclic GMP + H2O = GMP + H(+). Participates in processes of transmission and amplification of the visual signal. cGMP-PDEs are the effector molecules in G-protein-mediated phototransduction in vertebrate rods and cones. The protein is Retinal rod rhodopsin-sensitive cGMP 3',5'-cyclic phosphodiesterase subunit gamma (Pde6g) of Mus musculus (Mouse).